A 619-amino-acid chain; its full sequence is TOX high mobility group box family member 4 (619 aa).

Disordered stretches follow at residues 155 to 227 (LSLG…QKPV) and 306 to 335 (DPVPQSQTPSPPPVTAADPASPAPASTESP). At Thr176 the chain carries Phosphothreonine. Phosphoserine occurs at positions 178 and 182. A compositionally biased stretch (basic and acidic residues) spans 183–193 (LHEDGVDDFRR). Residues 208–218 (KQKAPKKRKKK) are compositionally biased toward basic residues. Residues 213 to 218 (KKRKKK) carry the Nuclear localization signal motif. The HMG box DNA-binding region spans 223 to 291 (PQKPVSAYAL…EYLKALAAYK (69 aa)). A Phosphothreonine modification is found at Thr313. Ser315 is subject to Phosphoserine. Low complexity predominate over residues 320–335 (TAADPASPAPASTESP). At Arg479 the chain carries Asymmetric dimethylarginine. 6 positions are modified to phosphoserine: Ser531, Ser548, Ser550, Ser558, Ser560, and Ser565.

Component of the PNUTS-PP1 phosphatase complex, composed of PPP1R10/PNUTS, TOX4, WDR82 and PPP1CA or PPP1CB or PPP1CC. Interacts with PPP1R10/PNUTS. Interacts with FOXO1 and CREB1 (increased by cAMP); FOXO1 and CREB1 are required for full induction of TOX4-dependent activity and the interactions are inhibited by insulin.

The protein resides in the nucleus. Its subcellular location is the chromosome. Its activity is regulated as follows. In liver, recruited to target gene promoters following treatment with dexamethasone and cAMP. Binding is decreased in presence of insulin. Transcription factor that modulates cell fate reprogramming from the somatic state to the pluripotent and neuronal fate. In liver, controls the expression of hormone-regulated gluconeogenic genes such as G6PC1 and PCK1. This regulation is independent of the insulin receptor activation. Also acts as a regulatory component of protein phosphatase 1 (PP1) complexes. Component of the PNUTS-PP1 protein phosphatase complex, a PP1 complex that regulates RNA polymerase II transcription pause-release. PNUTS-PP1 also plays a role in the control of chromatin structure and cell cycle progression during the transition from mitosis into interphase. This is TOX high mobility group box family member 4 from Mus musculus (Mouse).